The following is a 322-amino-acid chain: Tetraacyldisaccharide 4'-kinase (322 aa).

54-61 is an ATP binding site; sequence SVGGTGKT.

It belongs to the LpxK family.

It catalyses the reaction a lipid A disaccharide + ATP = a lipid IVA + ADP + H(+). It functions in the pathway glycolipid biosynthesis; lipid IV(A) biosynthesis; lipid IV(A) from (3R)-3-hydroxytetradecanoyl-[acyl-carrier-protein] and UDP-N-acetyl-alpha-D-glucosamine: step 6/6. In terms of biological role, transfers the gamma-phosphate of ATP to the 4'-position of a tetraacyldisaccharide 1-phosphate intermediate (termed DS-1-P) to form tetraacyldisaccharide 1,4'-bis-phosphate (lipid IVA). In Francisella tularensis subsp. holarctica (strain FTNF002-00 / FTA), this protein is Tetraacyldisaccharide 4'-kinase.